Reading from the N-terminus, the 92-residue chain is MSETTLNDIPQLRRGFRFQWEPAQNCHVLLYPEGMVKLNDSAAAILGQVDGDRSIAAIVAALRERFPESDGIEEDVLEFLEVARERSWIELH.

The protein belongs to the PqqD family. Monomer. Interacts with PqqE.

The protein operates within cofactor biosynthesis; pyrroloquinoline quinone biosynthesis. Its function is as follows. Functions as a PqqA binding protein and presents PqqA to PqqE, in the pyrroloquinoline quinone (PQQ) biosynthetic pathway. This chain is PqqA binding protein, found in Azotobacter vinelandii (strain DJ / ATCC BAA-1303).